Reading from the N-terminus, the 276-residue chain is Putative pyruvate, phosphate dikinase regulatory protein 1 (276 aa).

157-164 lines the ADP pocket; it reads GVSRTSKT.

It belongs to the pyruvate, phosphate/water dikinase regulatory protein family. PDRP subfamily.

The enzyme catalyses N(tele)-phospho-L-histidyl/L-threonyl-[pyruvate, phosphate dikinase] + ADP = N(tele)-phospho-L-histidyl/O-phospho-L-threonyl-[pyruvate, phosphate dikinase] + AMP + H(+). The catalysed reaction is N(tele)-phospho-L-histidyl/O-phospho-L-threonyl-[pyruvate, phosphate dikinase] + phosphate + H(+) = N(tele)-phospho-L-histidyl/L-threonyl-[pyruvate, phosphate dikinase] + diphosphate. In terms of biological role, bifunctional serine/threonine kinase and phosphorylase involved in the regulation of the pyruvate, phosphate dikinase (PPDK) by catalyzing its phosphorylation/dephosphorylation. The chain is Putative pyruvate, phosphate dikinase regulatory protein 1 from Staphylococcus haemolyticus (strain JCSC1435).